A 170-amino-acid chain; its full sequence is Large ribosomal subunit protein uL11 (170 aa).

This sequence belongs to the universal ribosomal protein uL11 family. In terms of assembly, part of the ribosomal stalk of the 50S ribosomal subunit. Interacts with L10 and the large rRNA to form the base of the stalk. L10 forms an elongated spine to which L12 dimers bind in a sequential fashion forming a multimeric L10(L12)X complex.

Its function is as follows. Forms part of the ribosomal stalk which helps the ribosome interact with GTP-bound translation factors. In Saccharolobus islandicus (strain Y.N.15.51 / Yellowstone #2) (Sulfolobus islandicus), this protein is Large ribosomal subunit protein uL11.